Reading from the N-terminus, the 382-residue chain is UDP-N-acetylglucosamine--N-acetylmuramyl-(pentapeptide) pyrophosphoryl-undecaprenol N-acetylglucosamine transferase (382 aa).

UDP-N-acetyl-alpha-D-glucosamine is bound by residues 11–13 (TGG), Asn-124, Arg-165, Ser-200, Ile-254, and Gln-299.

Belongs to the glycosyltransferase 28 family. MurG subfamily.

Its subcellular location is the cell inner membrane. It catalyses the reaction di-trans,octa-cis-undecaprenyl diphospho-N-acetyl-alpha-D-muramoyl-L-alanyl-D-glutamyl-meso-2,6-diaminopimeloyl-D-alanyl-D-alanine + UDP-N-acetyl-alpha-D-glucosamine = di-trans,octa-cis-undecaprenyl diphospho-[N-acetyl-alpha-D-glucosaminyl-(1-&gt;4)]-N-acetyl-alpha-D-muramoyl-L-alanyl-D-glutamyl-meso-2,6-diaminopimeloyl-D-alanyl-D-alanine + UDP + H(+). The protein operates within cell wall biogenesis; peptidoglycan biosynthesis. Cell wall formation. Catalyzes the transfer of a GlcNAc subunit on undecaprenyl-pyrophosphoryl-MurNAc-pentapeptide (lipid intermediate I) to form undecaprenyl-pyrophosphoryl-MurNAc-(pentapeptide)GlcNAc (lipid intermediate II). In Nitratidesulfovibrio vulgaris (strain DSM 19637 / Miyazaki F) (Desulfovibrio vulgaris), this protein is UDP-N-acetylglucosamine--N-acetylmuramyl-(pentapeptide) pyrophosphoryl-undecaprenol N-acetylglucosamine transferase.